The primary structure comprises 278 residues: S-formylglutathione hydrolase YeiG (278 aa).

Active-site charge relay system residues include Ser-145, Asp-223, and His-256.

The protein belongs to the esterase D family.

It catalyses the reaction S-formylglutathione + H2O = formate + glutathione + H(+). Serine hydrolase involved in the detoxification of formaldehyde. Hydrolyzes S-formylglutathione to glutathione and formate. The protein is S-formylglutathione hydrolase YeiG (yeiG) of Shigella flexneri serotype 5b (strain 8401).